We begin with the raw amino-acid sequence, 130 residues long: P antigen family member 5 (130 aa).

Disordered stretches follow at residues 1-88 and 101-130; these read MQAP…TDVE and DAPG…EGQL. Residues 14-26 show a composition bias toward basic and acidic residues; that stretch reads TREEVRDMSEHVT. A compositionally biased stretch (polar residues) spans 27–42; it reads RSQSSERGNDQESSQP. Phosphothreonine is present on residues Thr-113 and Thr-116.

This sequence belongs to the GAGE family.

The polypeptide is P antigen family member 5 (PAGE5) (Homo sapiens (Human)).